The primary structure comprises 452 residues: Plasmepsin I (452 aa).

At 1 to 37 (MALSIKEDFSSAFAKNESAVNSSTFNNNMKTWKIQKR) the chain is on the cytoplasmic side. The propeptide occupies 1-123 (MALSIKEDFS…TGLTQKPHLG (123 aa)). The helical; Signal-anchor for type II membrane protein transmembrane segment at 38 to 58 (FQILYVFFFLLITGALFYYLI) threads the bilayer. Over 59–452 (DNVLFPKNKK…VGFALAKKKL (394 aa)) the chain is Lumenal. The Peptidase A1 domain maps to 139 to 446 (YYGEAQIGDN…DYDNHTVGFA (308 aa)). The active site involves aspartate 157. The cysteines at positions 170 and 175 are disulfide-linked. Aspartate 337 is an active-site residue. Cysteine 372 and cysteine 408 are disulfide-bonded.

It belongs to the peptidase A1 family. In terms of processing, not N-glycosylated. Post-translationally, proteolytically cleaved into the soluble active mature form in the digestive vacuole by cysteine protease falcipains; the process begins at the early ring stage. Proteolysis requires an acidic environment.

The protein localises to the membrane. Its subcellular location is the vacuole lumen. It localises to the vacuole membrane. The catalysed reaction is Hydrolysis of the 33-Phe-|-Leu-34 bond in the alpha-chain of hemoglobin, leading to denaturation of molecule.. With respect to regulation, inhibited by KNI derived compounds KNI-10333 and to a lesser extent KNI-10743. In terms of biological role, during the asexual blood stage, catalyzes the initial cleavage of native host hemoglobin (Hb) resulting in Hb denaturation; specifically cleaves between Phe-33 and Leu-34 of Hb alpha-chain. Digestion of host Hb is an essential step which provides the parasite with amino acids for protein synthesis, and regulates osmolarity. The chain is Plasmepsin I from Plasmodium falciparum (isolate 3D7).